Consider the following 88-residue polypeptide: Small ribosomal subunit protein bS16c (88 aa).

It belongs to the bacterial ribosomal protein bS16 family.

Its subcellular location is the plastid. The protein resides in the chloroplast. This is Small ribosomal subunit protein bS16c from Calycanthus floridus var. glaucus (Eastern sweetshrub).